The sequence spans 640 residues: Autophagy-related protein 20 (640 aa).

2 stretches are compositionally biased toward polar residues: residues 1 to 18 and 126 to 153; these read MSDL…SETR and AETC…PSVS. Disordered stretches follow at residues 1 to 63 and 126 to 156; these read MSDL…NNKV and AETC…SNRK. S2 is subject to N-acetylserine. One can recognise a PX domain in the interval 140–301; it reads MNGETSASEE…DFLDPNNHNW (162 aa). Residues R192, S194, K218, and R267 each contribute to the a 1,2-diacyl-sn-glycero-3-phospho-(1D-myo-inositol-3-phosphate) site. A phosphoserine mark is found at S361 and S363. 2 coiled-coil regions span residues 475-512 and 562-593; these read LQNE…DNEM and TASI…KVIK.

The protein belongs to the sorting nexin family. Forms a complex with SNX4 and ATG17.

It localises to the endosome membrane. The protein resides in the preautophagosomal structure membrane. In terms of biological role, required for cytoplasm to vacuole transport (Cvt), pexophagy and mitophagy. Also involved in endoplasmic reticulum-specific autophagic process and is essential for the survival of cells subjected to severe ER stress. Functions in protein retrieval from the endocytic pathway. Required for proper sorting of the v-SNARE protein SNC1. This is Autophagy-related protein 20 (ATG20) from Saccharomyces cerevisiae (strain ATCC 204508 / S288c) (Baker's yeast).